A 562-amino-acid polypeptide reads, in one-letter code: MLNKDQFADNHFIRTIIEDDLKSGKHEAVQTRFPPEPNGYLHIGHAKSICLNFGLAYIYDGLCNLRFDDTNPEKENDEYVNAIKEDVEWLGFHWAGEPRFASNYFDQLYDYAVGLIKDGKAYVDDLTPEEMREYRGTLTEAGKNSPYRDRSVEENLDLFTRMKNGEFPDGSKTLRLKIDMASGNINMRDPVIYRIRRAHHHNTGDKWCIYPMYDYTHCISDAIEGITHSLCTLEFEAHRPLYDWVLDNIHAPHATRPRQYEFSRLELLYTITSKRKLNQLVVEKHVSGWDDPRMPTISGMRRRGYTPEGLRLFAKRAGISKSENIVDMSVLEGAIREELENSAPRLMAVLNPLKVTLTNFEAGRTQSRRAAFHPNHEEMGEREVPISQTIYIEADDFAENPPKGFKRLIPGGEVRLRHGYVIKCDEVVKDEAGNVVELKCSIDHDTLGKNPEGRKVKGVIHWVSAEHAAEIKVRLYDRLFTIERPDAVRGEDGEYLPFTDFLNPESVKEITAYAEPAAKDLPAESRWQFERIGYFVTDRKDHGKDTPVFNRTVTLKDSWQPK.

Residues 35–45 (PEPNGYLHIGH) carry the 'HIGH' region motif. Residues 36-38 (EPN) and 42-48 (HIGHAKS) contribute to the ATP site. Residues aspartate 68 and tyrosine 213 each coordinate L-glutamine. ATP-binding positions include threonine 232 and 264-265 (RL). The 'KMSKS' region motif lies at 271–275 (ITSKR).

This sequence belongs to the class-I aminoacyl-tRNA synthetase family. Monomer.

The protein resides in the cytoplasm. The catalysed reaction is tRNA(Gln) + L-glutamine + ATP = L-glutaminyl-tRNA(Gln) + AMP + diphosphate. In Neisseria meningitidis serogroup A / serotype 4A (strain DSM 15465 / Z2491), this protein is Glutamine--tRNA ligase.